The primary structure comprises 231 residues: PIAGSMVLAAILLKLGGYGIIRIMQTLPTTKTDLFIPFITLALWGATLANLTCLQQTDLKSLIAYSSISHMGLVVAAITIQTPWGLSGAMALMIAHGFTSSALFCLANTTYERTHTRVLILTRGLHNILPMATTWWLLTNLMNIATPPTLNFTSELLIMSSLFNWCPTTIILLGLSMLITASYSLHMFLSTQAGPTLLNNQTEPTHSREHLLMALHLIPLMLISMKPELII.

The next 6 helical transmembrane spans lie at 1-21 (PIAGSMVLAAILLKLGGYGII), 34-54 (LFIPFITLALWGATLANLTCL), 61-80 (SLIAYSSISHMGLVVAAITI), 84-106 (WGLSGAMALMIAHGFTSSALFCL), 118-138 (VLILTRGLHNILPMATTWWLL), and 156-178 (LLIMSSLFNWCPTTIILLGLSML).

Belongs to the complex I subunit 4 family.

The protein localises to the mitochondrion membrane. It catalyses the reaction a ubiquinone + NADH + 5 H(+)(in) = a ubiquinol + NAD(+) + 4 H(+)(out). In terms of biological role, core subunit of the mitochondrial membrane respiratory chain NADH dehydrogenase (Complex I) that is believed to belong to the minimal assembly required for catalysis. Complex I functions in the transfer of electrons from NADH to the respiratory chain. The immediate electron acceptor for the enzyme is believed to be ubiquinone. In Azemiops feae (Fea's viper), this protein is NADH-ubiquinone oxidoreductase chain 4 (MT-ND4).